A 516-amino-acid polypeptide reads, in one-letter code: MDFNAAVCAALAFISLLSYYLIWLRSASTHQAPPEAGGAWPFLGHLNIISGHTGLPHVSLGNLADKHGPIFGIRIGVHRAVVVSSSEVIKELFTTNDAAVSSRPSVKAGKHLAYDYAMLGFSSYGTYWRQMRKLVSLELFSARRVELQRNVRVSETAHFINELYSAWEERRDGSSRVSVEMKELFGELSMNVILKMVAGKRFSGGDDAEEARRCRRVMREFFHLAGLFVLSDAFPYLGWLDLGGHERRMKRTAEEMDELVGEWLAEHRRKEYSGEGKAQDFMDVMLSEVKGANFECEYDVDTIIKATCGTLIAGGTDTTAVVFIWALALLLNNPHVLQKAQHELDTHVGKQRRVNESDLNNLVYLQAITKETLRLYPPGPLGGTRRLTQDCHVGGYHIPKETWLIVNLWKLHRDPRVWSDPSEFRPERFLNGEKSMDVKGQDFELIPFSAGRRICPGTNFGLQMLHLVLASLLQAFDLSRVSNEEIDMSESAGLTNIKATPLDVLIAPRLPPSLYI.

Residues Phe3–Trp23 traverse the membrane as a helical segment. Cys455 contacts heme.

The protein belongs to the cytochrome P450 family. Heme is required as a cofactor.

The protein localises to the membrane. It catalyses the reaction genkwanin + reduced [NADPH--hemoprotein reductase] + O2 = scutellarein 7-methyl ether + oxidized [NADPH--hemoprotein reductase] + H2O. The enzyme catalyses (2S)-sakuranetin + reduced [NADPH--hemoprotein reductase] + O2 = (2S)-7-methylcarthamidin + oxidized [NADPH--hemoprotein reductase] + H2O + H(+). The catalysed reaction is apigenin 4',7-dimethyl ether + reduced [NADPH--hemoprotein reductase] + O2 = ladanein + oxidized [NADPH--hemoprotein reductase] + H2O + H(+). It carries out the reaction (2S)-naringenin 4',7-dimethyl ether + reduced [NADPH--hemoprotein reductase] + O2 = (2S)-carthamidin-4',7-dimethyl ether + oxidized [NADPH--hemoprotein reductase] + H2O + H(+). The protein operates within flavonoid metabolism. 6-OH hydroxylase involved in the biosynthesis of polymethoxylated flavonoids natural products such as pebrellin, aroma compounds which contribute to the flavor of peppermint, and exhibit pharmacological activities such as anti-allergic, anti-oxidant, antibacterial, anti-proliferative, and anti-inflammatory effects. Catalyzes the 6-hydroxylation of 7-O-methylated precursors such as the conversion of genkwanin (GENK) to scutellarein-7-methyl ether (SCU7Me). Can also use apigenin-7,4'-dimethyl ether (AdM), naringenin-7-methyl ether (SAK) and naringenin-7,4'-dimethyl ether (NdM) as substrates. The chain is Flavonoid-6-hydroxylase from Mentha piperita (Peppermint).